A 487-amino-acid polypeptide reads, in one-letter code: Malonate-semialdehyde dehydrogenase (487 aa).

NAD(+)-binding residues include alanine 150, phenylalanine 152, lysine 176, glutamate 179, arginine 180, serine 229, and threonine 251. The active-site Nucleophile is the cysteine 284. An NAD(+)-binding site is contributed by glutamate 382.

The protein belongs to the aldehyde dehydrogenase family. IolA subfamily. Homotetramer.

The catalysed reaction is 3-oxopropanoate + NAD(+) + CoA + H2O = hydrogencarbonate + acetyl-CoA + NADH + H(+). It catalyses the reaction 2-methyl-3-oxopropanoate + NAD(+) + CoA + H2O = propanoyl-CoA + hydrogencarbonate + NADH + H(+). Its pathway is polyol metabolism; myo-inositol degradation into acetyl-CoA; acetyl-CoA from myo-inositol: step 7/7. In terms of biological role, catalyzes the oxidation of malonate semialdehyde (MSA) and methylmalonate semialdehyde (MMSA) into acetyl-CoA and propanoyl-CoA, respectively. Is involved in a myo-inositol catabolic pathway. Bicarbonate, and not CO2, is the end-product of the enzymatic reaction. The polypeptide is Malonate-semialdehyde dehydrogenase (Bacillus subtilis subsp. natto).